We begin with the raw amino-acid sequence, 121 residues long: MKGAQYLAGLLLLLFVQNSICVPLQDYHTSTETVEGLLARGQGFTTAKRHSEGTFSNDYSKYLETRRAQDFVEWLMNSKSNGGSAKRHAEGTYTSDISSFLRDQAAQNFVAWLKSGQPKQE.

The N-terminal stretch at 1-21 (MKGAQYLAGLLLLLFVQNSIC) is a signal peptide. A propeptide spanning residues 80-85 (SNGGSA) is cleaved from the precursor.

It belongs to the glucagon family.

It is found in the secreted. In terms of biological role, plays a key role in glucose metabolism and homeostasis. Regulates blood glucose by increasing gluconeogenesis and decreasing glycolysis. This Carassius auratus (Goldfish) protein is Pro-glucagon (gcg).